A 458-amino-acid chain; its full sequence is N-acetylgalactosamine kinase (458 aa).

Residues Arg-43, Glu-49, His-50, and Asp-52 each coordinate alpha-D-galactose. Residues Gly-143, Ser-145, and Ser-146 each contribute to the ATP site. Asp-190 is a binding site for alpha-D-galactose. Residue Asp-190 is the Proton acceptor of the active site. ATP contacts are provided by Asn-233 and Lys-234.

Belongs to the GHMP kinase family. GalK subfamily. In terms of assembly, monomer.

It carries out the reaction N-acetyl-alpha-D-galactosamine + ATP = N-acetyl-alpha-D-galactosamine 1-phosphate + ADP + H(+). Acts on GalNAc. Also acts as a galactokinase when galactose is present at high concentrations. The protein is N-acetylgalactosamine kinase (Galk2) of Mus musculus (Mouse).